Consider the following 803-residue polypeptide: Zinc finger X-linked protein ZXDB (803 aa).

3 disordered regions span residues 1–91, 120–140, and 218–260; these read MEIP…GGDD, EAEE…AGPT, and AAHP…GPRG. The segment covering 13–26 has biased composition (gly residues); that stretch reads LQGGGGGGIPAGGG. 10 C2H2-type zinc fingers span residues 271-295, 304-328, 334-358, 364-386, 393-417, 424-448, 454-478, 484-508, 514-538, and 547-572; these read YLCP…LLTH, FKCP…LQSH, FGCP…MKGH, FKCE…QRSH, YQCA…NRAH, FSCS…LRSH, FLCD…KRKH, FMCP…SITH, FVCP…SKKH, and SRCP…VKRH. Residues 271 to 577 form a required for interaction with ZXDC region; it reads YLCPEAQCGQ…MVKRHKVGQD (307 aa). Residues 576–703 form a required for transcriptional activation region; sequence QDLLAQLEAA…NMDEVSSVSV (128 aa).

Belongs to the ZXD family. As to quaternary structure, self-associates. Interacts with ZXDC and CIITA. In terms of tissue distribution, may be expressed in brain, heart, kidney, liver, lung, muscle and placenta.

It localises to the nucleus. Its function is as follows. Cooperates with CIITA to promote transcription of MHC class I and MHC class II genes. The sequence is that of Zinc finger X-linked protein ZXDB (ZXDB) from Homo sapiens (Human).